The sequence spans 84 residues: Small ribosomal subunit protein bS18B (84 aa).

Residues 1-10 (MAVKRAPSKK) are compositionally biased toward basic residues. The segment at 1 to 20 (MAVKRAPSKKVRAEQARRPK) is disordered.

Belongs to the bacterial ribosomal protein bS18 family. Part of the 30S ribosomal subunit. Forms a tight heterodimer with protein bS6.

Binds as a heterodimer with protein bS6 to the central domain of the 16S rRNA, where it helps stabilize the platform of the 30S subunit. The chain is Small ribosomal subunit protein bS18B from Nocardia farcinica (strain IFM 10152).